The sequence spans 209 residues: uncharacterized protein (209 aa).

Helical transmembrane passes span 26–48, 147–169, and 179–196; these read LRYF…GLAV, AYLV…PFLM, and IVAA…VYLL.

Its subcellular location is the cell membrane. This is an uncharacterized protein from Archaeoglobus fulgidus (strain ATCC 49558 / DSM 4304 / JCM 9628 / NBRC 100126 / VC-16).